The sequence spans 635 residues: Threonine--tRNA ligase (635 aa).

The interval 1–144 is editing domain; the sequence is MQLLLIHSDY…RSIRPEGTQR (144 aa). A catalytic region spans residues 215–514; the sequence is PHVELMRRLE…TEEGKVPMLP (300 aa). Zn(2+) contacts are provided by Cys307, His359, and His483.

This sequence belongs to the class-II aminoacyl-tRNA synthetase family. Homodimer. The cofactor is Zn(2+).

It localises to the cytoplasm. The enzyme catalyses tRNA(Thr) + L-threonine + ATP = L-threonyl-tRNA(Thr) + AMP + diphosphate + H(+). Its function is as follows. Catalyzes the attachment of threonine to tRNA(Thr) in a two-step reaction: L-threonine is first activated by ATP to form Thr-AMP and then transferred to the acceptor end of tRNA(Thr). Also edits incorrectly charged L-seryl-tRNA(Thr). This is Threonine--tRNA ligase from Methanosarcina barkeri (strain Fusaro / DSM 804).